The following is a 227-amino-acid chain: Chalcone--flavanone isomerase (227 aa).

Residues Thr50, Asn115, and Ser192 each contribute to the substrate site.

Belongs to the chalcone isomerase family. Fibers.

The catalysed reaction is a chalcone = a flavanone.. It participates in secondary metabolite biosynthesis; flavonoid biosynthesis. Its function is as follows. Catalyzes the intramolecular cyclization of bicyclic chalcones into tricyclic (S)-flavanones. Responsible for the isomerization of 4,2',4',6'-tetrahydroxychalcone (also termed chalcone) into naringenin. The chain is Chalcone--flavanone isomerase (CHI) from Gossypium hirsutum (Upland cotton).